The primary structure comprises 499 residues: Cytochrome P450 710A2 (499 aa).

Residues Val-5–Ile-25 traverse the membrane as a helical segment. Heme is bound at residue Cys-439.

It belongs to the cytochrome P450 family. It depends on heme as a cofactor. In terms of tissue distribution, expressed in the vascular tissues of roots, shoots, stems and leaves. Expressed in root tips, carpes, siliques and seeds.

The protein localises to the membrane. The enzyme catalyses 5-dehydroepisterol + NADPH + O2 + H(+) = ergosta-5,7,22,24(28)-tetraen-3beta-ol + NADP(+) + 2 H2O. It participates in steroid biosynthesis; sterol biosynthesis. Its function is as follows. Required to form the C-22 double bond in the sterol side chain. Possesses in vitro C-22 desaturase activity toward 24-epi-campesterol and beta-sitosterol and produces brassicasterol and stigmasterol, respectively. No activity with campesterol. In Arabidopsis thaliana (Mouse-ear cress), this protein is Cytochrome P450 710A2.